Reading from the N-terminus, the 206-residue chain is Ribosomal RNA small subunit methyltransferase G (206 aa).

S-adenosyl-L-methionine contacts are provided by residues G74, L79, 125-126 (VE), and R140.

The protein belongs to the methyltransferase superfamily. RNA methyltransferase RsmG family.

The protein resides in the cytoplasm. It carries out the reaction guanosine(527) in 16S rRNA + S-adenosyl-L-methionine = N(7)-methylguanosine(527) in 16S rRNA + S-adenosyl-L-homocysteine. Functionally, specifically methylates the N7 position of guanine in position 527 of 16S rRNA. This is Ribosomal RNA small subunit methyltransferase G from Shewanella sp. (strain MR-4).